Here is a 502-residue protein sequence, read N- to C-terminus: 4,4'-diapophytoene desaturase (4,4'-diaponeurosporene-forming) (502 aa).

FAD is bound at residue valine 5 to alanine 17.

It belongs to the carotenoid/retinoid oxidoreductase family. CrtN subfamily.

It catalyses the reaction 15-cis-4,4'-diapophytoene + 3 FAD + 3 H(+) = all-trans-4,4'-diaponeurosporene + 3 FADH2. The protein operates within carotenoid biosynthesis; staphyloxanthin biosynthesis; staphyloxanthin from farnesyl diphosphate: step 2/5. Functionally, involved in the biosynthesis of the yellow-orange carotenoid staphyloxanthin, which plays a role in the virulence via its protective function against oxidative stress. Catalyzes three successive dehydrogenation reactions that lead to the introduction of three double bonds into 4,4'-diapophytoene (dehydrosqualene), with 4,4'-diapophytofluene and 4,4'-diapo-zeta-carotene as intermediates, and 4,4'-diaponeurosporene (the major deep-yellow pigment in staphylococci strains) as the end product. The sequence is that of 4,4'-diapophytoene desaturase (4,4'-diaponeurosporene-forming) from Staphylococcus aureus (strain USA300).